The chain runs to 69 residues: Conotoxin reg3.6 (69 aa).

The first 20 residues, M1–A20, serve as a signal peptide directing secretion. Residues L21–R52 constitute a propeptide that is removed on maturation. Cystine bridges form between C54–C68, C55–C66, and C60–C69.

The protein belongs to the conotoxin M superfamily. As to expression, expressed by the venom duct.

Its subcellular location is the secreted. This chain is Conotoxin reg3.6, found in Conus regius (Crown cone).